Consider the following 737-residue polypeptide: LIMR family protein R05D3.2 (737 aa).

Over residues 280–293 (ADIEEENSEQSEDV) the composition is skewed to acidic residues. Positions 280 to 416 (ADIEEENSEQ…PKKPKNPNFD (137 aa)) are disordered. Residues 303–318 (ETIHQVDRSDTPHLED) show a composition bias toward basic and acidic residues.

The protein belongs to the LIMR family.

This chain is LIMR family protein R05D3.2, found in Caenorhabditis elegans.